The following is a 273-amino-acid chain: NAD-dependent protein deacetylase 2 (273 aa).

In terms of domain architecture, Deacetylase sirtuin-type spans 1–273 (MSNAPLANQS…RCEAALAFLL (273 aa)). Residues 26–46 (GAGCSTNSGIPDYRDSHGNWK) and 104–107 (QNVD) contribute to the NAD(+) site. Histidine 122 (proton acceptor) is an active-site residue. Zn(2+)-binding residues include cysteine 130, cysteine 133, cysteine 181, and cysteine 184. Residues 221–223 (GSS), 247–249 (NLG), and cysteine 265 each bind NAD(+).

The protein belongs to the sirtuin family. Class II subfamily. Zn(2+) is required as a cofactor.

The protein resides in the cytoplasm. The enzyme catalyses N(6)-acetyl-L-lysyl-[protein] + NAD(+) + H2O = 2''-O-acetyl-ADP-D-ribose + nicotinamide + L-lysyl-[protein]. NAD-dependent protein deacetylase which modulates the activities of several enzymes which are inactive in their acetylated form. This Bradyrhizobium diazoefficiens (strain JCM 10833 / BCRC 13528 / IAM 13628 / NBRC 14792 / USDA 110) protein is NAD-dependent protein deacetylase 2.